Here is a 447-residue protein sequence, read N- to C-terminus: GTPase Der (447 aa).

EngA-type G domains lie at 3-167 (PVIA…ALPE) and 180-353 (IRLA…KSAN). Residues 9–16 (GRPNVGKS), 56–60 (DTGGF), 119–122 (NKAE), 186–193 (GRPNVGKS), 233–237 (DTAGL), and 298–301 (NKWD) each bind GTP. The 85-residue stretch at 354–438 (RKMPTPVLTR…PLRIEMKTSS (85 aa)) folds into the KH-like domain.

It belongs to the TRAFAC class TrmE-Era-EngA-EngB-Septin-like GTPase superfamily. EngA (Der) GTPase family. As to quaternary structure, associates with the 50S ribosomal subunit.

GTPase that plays an essential role in the late steps of ribosome biogenesis. In Acidovorax sp. (strain JS42), this protein is GTPase Der.